The chain runs to 208 residues: ATP phosphoribosyltransferase (208 aa).

Belongs to the ATP phosphoribosyltransferase family. Short subfamily. Heteromultimer composed of HisG and HisZ subunits.

The protein localises to the cytoplasm. It carries out the reaction 1-(5-phospho-beta-D-ribosyl)-ATP + diphosphate = 5-phospho-alpha-D-ribose 1-diphosphate + ATP. It functions in the pathway amino-acid biosynthesis; L-histidine biosynthesis; L-histidine from 5-phospho-alpha-D-ribose 1-diphosphate: step 1/9. Catalyzes the condensation of ATP and 5-phosphoribose 1-diphosphate to form N'-(5'-phosphoribosyl)-ATP (PR-ATP). Has a crucial role in the pathway because the rate of histidine biosynthesis seems to be controlled primarily by regulation of HisG enzymatic activity. The polypeptide is ATP phosphoribosyltransferase (Oceanobacillus iheyensis (strain DSM 14371 / CIP 107618 / JCM 11309 / KCTC 3954 / HTE831)).